Here is a 96-residue protein sequence, read N- to C-terminus: Xylulose kinase (96 aa).

Residue 71–72 coordinates substrate; sequence QH.

This sequence belongs to the FGGY kinase family.

The enzyme catalyses D-xylulose + ATP = D-xylulose 5-phosphate + ADP + H(+). Its function is as follows. Catalyzes the phosphorylation of D-xylulose to D-xylulose 5-phosphate. This is Xylulose kinase from Arthrobacter sp. (strain NRRL B3728).